The chain runs to 567 residues: Septation ring formation regulator EzrA (567 aa).

The Extracellular segment spans residues 1–2 (ME). The helical transmembrane segment at 3 to 21 (IAVIVLLLLGGVMIYNHVY) threads the bilayer. Over 22 to 567 (RKKMYSEIDR…IFRDERSKEE (546 aa)) the chain is Cytoplasmic. 2 coiled-coil regions span residues 97–188 (RYAK…LTAS) and 254–465 (REIV…LEEK).

Belongs to the EzrA family.

It localises to the cell membrane. Functionally, negative regulator of FtsZ ring formation; modulates the frequency and position of FtsZ ring formation. Inhibits FtsZ ring formation at polar sites. Interacts either with FtsZ or with one of its binding partners to promote depolymerization. The protein is Septation ring formation regulator EzrA of Geobacillus sp. (strain WCH70).